Here is a 229-residue protein sequence, read N- to C-terminus: Potassium/proton antiporter CemA (229 aa).

4 helical membrane-spanning segments follow: residues 7-27 (FTPL…SLSF), 114-134 (IICF…LVIL), 154-174 (ILLL…ELMV), and 189-209 (IISG…KYWI).

The protein belongs to the CemA family.

The protein localises to the plastid. It is found in the chloroplast inner membrane. The catalysed reaction is K(+)(in) + H(+)(out) = K(+)(out) + H(+)(in). Functionally, contributes to K(+)/H(+) antiport activity by supporting proton efflux to control proton extrusion and homeostasis in chloroplasts in a light-dependent manner to modulate photosynthesis. Prevents excessive induction of non-photochemical quenching (NPQ) under continuous-light conditions. Indirectly promotes efficient inorganic carbon uptake into chloroplasts. This chain is Potassium/proton antiporter CemA, found in Coffea arabica (Arabian coffee).